The chain runs to 461 residues: tRNA modification GTPase MnmE (461 aa).

Residues arginine 23, glutamate 88, and arginine 127 each contribute to the (6S)-5-formyl-5,6,7,8-tetrahydrofolate site. One can recognise a TrmE-type G domain in the interval 223–382; it reads GLSTVIVGKP…IEDALAEMVY (160 aa). Asparagine 233 lines the K(+) pocket. Residues 233–238, 252–258, and 277–280 each bind GTP; these read NVGKSS, TDVPGTT, and DTAG. Serine 237 lines the Mg(2+) pocket. The K(+) site is built by threonine 252, valine 254, and threonine 257. Threonine 258 is a binding site for Mg(2+). Residue lysine 461 coordinates (6S)-5-formyl-5,6,7,8-tetrahydrofolate.

Belongs to the TRAFAC class TrmE-Era-EngA-EngB-Septin-like GTPase superfamily. TrmE GTPase family. In terms of assembly, homodimer. Heterotetramer of two MnmE and two MnmG subunits. It depends on K(+) as a cofactor.

The protein localises to the cytoplasm. Its function is as follows. Exhibits a very high intrinsic GTPase hydrolysis rate. Involved in the addition of a carboxymethylaminomethyl (cmnm) group at the wobble position (U34) of certain tRNAs, forming tRNA-cmnm(5)s(2)U34. The polypeptide is tRNA modification GTPase MnmE (Alkaliphilus oremlandii (strain OhILAs) (Clostridium oremlandii (strain OhILAs))).